A 273-amino-acid chain; its full sequence is Dermonecrotic toxin LspiSicTox-betaIE1ii (273 aa).

The active site involves His5. Positions 25 and 27 each coordinate Mg(2+). His41 (nucleophile) is an active-site residue. Cystine bridges form between Cys45-Cys51 and Cys47-Cys189. Mg(2+) is bound at residue Asp85.

It belongs to the arthropod phospholipase D family. Class II subfamily. It depends on Mg(2+) as a cofactor. Expressed by the venom gland.

The protein localises to the secreted. The enzyme catalyses an N-(acyl)-sphingosylphosphocholine = an N-(acyl)-sphingosyl-1,3-cyclic phosphate + choline. It carries out the reaction an N-(acyl)-sphingosylphosphoethanolamine = an N-(acyl)-sphingosyl-1,3-cyclic phosphate + ethanolamine. The catalysed reaction is a 1-acyl-sn-glycero-3-phosphocholine = a 1-acyl-sn-glycero-2,3-cyclic phosphate + choline. It catalyses the reaction a 1-acyl-sn-glycero-3-phosphoethanolamine = a 1-acyl-sn-glycero-2,3-cyclic phosphate + ethanolamine. Its function is as follows. Dermonecrotic toxins cleave the phosphodiester linkage between the phosphate and headgroup of certain phospholipids (sphingolipid and lysolipid substrates), forming an alcohol (often choline) and a cyclic phosphate. This toxin acts on sphingomyelin (SM). It may also act on ceramide phosphoethanolamine (CPE), lysophosphatidylcholine (LPC) and lysophosphatidylethanolamine (LPE), but not on lysophosphatidylserine (LPS), and lysophosphatidylglycerol (LPG). It acts by transphosphatidylation, releasing exclusively cyclic phosphate products as second products. Induces dermonecrosis, hemolysis, increased vascular permeability, edema, inflammatory response, and platelet aggregation. This is Dermonecrotic toxin LspiSicTox-betaIE1ii from Loxosceles spinulosa (Recluse spider).